We begin with the raw amino-acid sequence, 83 residues long: Large ribosomal subunit protein eL31 (83 aa).

This sequence belongs to the eukaryotic ribosomal protein eL31 family.

This is Large ribosomal subunit protein eL31 from Methanococcus maripaludis (strain DSM 14266 / JCM 13030 / NBRC 101832 / S2 / LL).